Here is a 1186-residue protein sequence, read N- to C-terminus: Atrophin-1 (1186 aa).

Disordered stretches follow at residues 1-604 (MKTR…PTVT), 618-763 (ASSP…ARFN), and 781-858 (VPLE…HRPP). The Nuclear localization signal motif lies at 16 to 32 (RKKEAPGPREELRSRGR). Over residues 17–29 (KKEAPGPREELRS) the composition is skewed to basic and acidic residues. Ser34 is subject to Phosphoserine. Basic and acidic residues predominate over residues 45–63 (GKAEKSRQTAKKARVEEAS). Phosphoserine is present on residues Ser77, Ser79, Ser100, Ser102, and Ser106. Residues 107-127 (LDGRSLNDDGSSDPRDIDQDN) show a composition bias toward basic and acidic residues. Positions 128-151 (RSTSPSIYSPGSVENDSDSSSGLS) are enriched in polar residues. Pro residues predominate over residues 157 to 173 (PYHPPPLFPPSPQPPDS). Composition is skewed to low complexity over residues 258–270 (PISV…SGAP), 349–365 (PTLA…SSSA), and 375–396 (SSSS…SSAS). Polar residues predominate over residues 416 to 437 (SLSVSNQPPKYTQPSLPSQAVW). The segment covering 484–503 (QQQQQQQQQQQQQQQHHGNS) has biased composition (low complexity). The interval 513 to 563 (HPLEGGSSHHAHPYAMSPSLGSLRPYPPGPAHLPPPHSQVSYSQAGPNGPP) is involved in binding BAIAP2. Over residues 537–549 (PYPPGPAHLPPPH) the composition is skewed to pro residues. Composition is skewed to low complexity over residues 565 to 582 (SSSS…YPCS) and 618 to 628 (ASSPAGYKTAS). Ser628 bears the Phosphoserine mark. At Lys637 the chain carries N6-acetyllysine. Thr649 carries the post-translational modification Phosphothreonine. Residue Ser657 is modified to Phosphoserine. At Thr665 the chain carries Phosphothreonine. Composition is skewed to pro residues over residues 689-714 (GPGP…PASG) and 735-748 (SPVP…PPPK). Ser735 is modified (phosphoserine; by MAPK8). Phosphoserine is present on residues Ser742 and Ser744. The segment covering 791-835 (KRADLVEKVRREAEQRAREEKEREREREREKEREREKERELERSV) has biased composition (basic and acidic residues). Residues 875 to 890 (DTPALRTLSEYARPHV) form a required for interaction with FAT1 region. Position 892 is a phosphoserine (Ser892). The short motif at 1029–1037 (ALGNDPLAR) is the Nuclear export signal element. Arg1111 carries the post-translational modification Asymmetric dimethylarginine. Lys1179 participates in a covalent cross-link: Glycyl lysine isopeptide (Lys-Gly) (interchain with G-Cter in SUMO2).

Interacts with NR2E1; the interaction represses the transcriptional activity of NR2E1. Interacts with BAIAP2, WWP1, WWP2, WWP3 and RERE. Interacts (via its N-terminus) with MTG8; the interaction enhances transcriptional repression of MTG8. Interacts with FAT1 (via a C-terminal domain). Interacts with PQBP1. Post-translationally, phosphorylated in vitro by MAPK8/JNK1 on Ser-735.

Its subcellular location is the nucleus. The protein resides in the cytoplasm. It is found in the perinuclear region. It localises to the cell junction. Its function is as follows. Transcriptional corepressor. Corepressor of MTG8 transcriptional repression. Recruits NR2E1 to repress transcription. Has some intrinsic repression activity. Promotes vascular smooth cell (VSMC) migration and orientation. The polypeptide is Atrophin-1 (ATN1) (Pan troglodytes (Chimpanzee)).